The sequence spans 411 residues: Elongation factor 1-gamma (411 aa).

The GST N-terminal domain occupies 3-84 (LTLWSGVNPE…HIARLDRSGG (82 aa)). The GST C-terminal domain occupies 90–216 (TPLEGSQVDM…QGATFGAREG (127 aa)). The interval 212-265 (GAREGGAKGQGRGCARPGREEAERAAAAADGAEEEDEAPREKKKPNPLDELPPS) is disordered. The segment covering 214-223 (REGGAKGQGR) has biased composition (gly residues). Positions 255–411 (KPNPLDELPP…RPVLEGRVFK (157 aa)) constitute an EF-1-gamma C-terminal domain.

EF-1 is composed of four subunits: alpha, beta, delta, and gamma.

Functionally, probably plays a role in anchoring the complex to other cellular components. The protein is Elongation factor 1-gamma of Trypanosoma cruzi.